A 63-amino-acid polypeptide reads, in one-letter code: Large ribosomal subunit protein uL30 (63 aa).

It belongs to the universal ribosomal protein uL30 family. Part of the 50S ribosomal subunit.

The chain is Large ribosomal subunit protein uL30 from Rickettsia felis (strain ATCC VR-1525 / URRWXCal2) (Rickettsia azadi).